A 494-amino-acid polypeptide reads, in one-letter code: MLTSKGQGFLHGGLCLWLCVFTPFFKGCVGCATEERLFHKLFSHYNQFIRPVENVSDPVTVHFEVAITQLANVDEVNQIMETNLWLRHIWNDYKLRWDPMEYDGIETLRIPADKIWKPDIVLYNNAVGDFQVEGKTKALLKYNGMITWTPPAIFKSSCPMDITFFPFDHQNCSLKFGSWTYDKAEIDLLIIGSKVDMNDFWENSEWEIIDASGYKHDIKYNCCEEIYTDITYSFYIRRLPMFYTINLIIPCLFISFLTVLVFYLPSDCGEKVTLCISVLLSLTVFLLVITETIPSTSLVVPLVGEYLLFTMIFVTLSIVVTVFVLNIHYRTPTTHTMPRWVKTVFLKLLPQVLLMRWPLDKTRGTGSDAVPRGLARRPAKGKLASHGEPRHLKECFHCHKSNELATSKRRLSHHPLQWVVENSEHSPEVEDVINSVQFIAENMKSHNETKEVEDDWKYVAMVVDRVFLWVFIIVCVFGTAGLFLQPLLGNTGKS.

A signal peptide spans 1-25 (MLTSKGQGFLHGGLCLWLCVFTPFF). Topologically, residues 26-239 (KGCVGCATEE…ITYSFYIRRL (214 aa)) are extracellular. Asn54 and Asn171 each carry an N-linked (GlcNAc...) asparagine glycan. Cystine bridges form between Cys158/Cys172 and Cys222/Cys223. The next 3 helical transmembrane spans lie at 240–264 (PMFYTINLIIPCLFISFLTVLVFYL), 272–290 (VTLCISVLLSLTVFLLVIT), and 306–327 (YLLFTMIFVTLSIVVTVFVLNI). The Cytoplasmic portion of the chain corresponds to 328-465 (HYRTPTTHTM…WKYVAMVVDR (138 aa)). At Ser401 the chain carries Phosphoserine. The chain crosses the membrane as a helical span at residues 466–484 (VFLWVFIIVCVFGTAGLFL).

It belongs to the ligand-gated ion channel (TC 1.A.9) family. Acetylcholine receptor (TC 1.A.9.1) subfamily. Alpha-6/CHRNA6 sub-subfamily. As to quaternary structure, neuronal AChR is composed of two different types of subunits: alpha and non-alpha (beta). CHRNA6/alpha-6 subunit can be combined to CHRNB2/beta-2, CHRNA4/alpha-4 and CHRNB3/beta-3 to give rise to functional receptors. Heteropentamers containing CHRNB3 have an stoichiometry of (CHRNA6:CHRNB2)2:CHRNB3. Interacts with LYPD6.

The protein localises to the synaptic cell membrane. It carries out the reaction Ca(2+)(in) = Ca(2+)(out). The catalysed reaction is K(+)(in) = K(+)(out). It catalyses the reaction Na(+)(in) = Na(+)(out). Activated by a myriad of ligands such as acetylcholine, cytisine and nicotine. CHRNA6 nAChR activity is inhibited by the antagonists alpha-conotoxin MII and PIA, a small disulfide-constrained peptides from cone snails. Component of neuronal acetylcholine receptors (nAChRs) that function as pentameric, ligand-gated cation channels with high calcium permeability among other activities. nAChRs are excitatory neurotrasnmitter receptors formed by a collection of nAChR subunits known to mediate synaptic transmission in the nervous system and the neuromuscular junction. Each nAchR subunit confers differential attributes to channel properties, including activation, deactivation and desensitization kinetics, pH sensitivity, cation permeability, and binding to allosteric modulators. CHRNA6 forms pentameric channels with CHRNB2, CHRNB3 and CHRNA4 that exhibit high sensitivity to ACh and nicotine and are predominantly expressed in only a few brain areas, including dopaminergic neurons, norepirephrine neurons and cells of the visual system. nAChrs containing CHRNA6 subunits mediate endogenous cholinergic modulation of dopamine and gamma-aminobutyric acid (GABA) release in response to nicotine at nerve terminals. This is Neuronal acetylcholine receptor subunit alpha-6 (CHRNA6) from Pan troglodytes (Chimpanzee).